Reading from the N-terminus, the 154-residue chain is Transcription antitermination protein NusB (154 aa).

The protein belongs to the NusB family.

Its function is as follows. Involved in transcription antitermination. Required for transcription of ribosomal RNA (rRNA) genes. Binds specifically to the boxA antiterminator sequence of the ribosomal RNA (rrn) operons. The sequence is that of Transcription antitermination protein NusB from Hyphomonas neptunium (strain ATCC 15444).